The chain runs to 125 residues: Small ribosomal subunit protein mS41 (125 aa).

The N-terminal 10 residues, 1–10 (MLSIFGCVRA), are a transit peptide targeting the mitochondrion. The disordered stretch occupies residues 103 to 125 (SFFGGERNRKATVAKWRAEQRNK).

This sequence belongs to the mitochondrion-specific ribosomal protein mS41 family.

It is found in the mitochondrion. Involved in telomere length regulation. The sequence is that of Small ribosomal subunit protein mS41 (FYV4) from Candida glabrata (strain ATCC 2001 / BCRC 20586 / JCM 3761 / NBRC 0622 / NRRL Y-65 / CBS 138) (Yeast).